A 241-amino-acid chain; its full sequence is 15,16-dihydrobiliverdin:ferredoxin oxidoreductase (241 aa).

Belongs to the HY2 family.

The catalysed reaction is 15,16-dihydrobiliverdin + oxidized 2[4Fe-4S]-[ferredoxin] = biliverdin IXalpha + reduced 2[4Fe-4S]-[ferredoxin] + 2 H(+). Its function is as follows. Catalyzes the two-electron reduction of biliverdin IX-alpha at the C15 methine bridge. The protein is 15,16-dihydrobiliverdin:ferredoxin oxidoreductase (pebA) of Prochlorococcus marinus (strain SARG / CCMP1375 / SS120).